An 800-amino-acid chain; its full sequence is Nucleolar RNA helicase 2-B (800 aa).

The span at 1-14 (MPGKVYTDEMEGKS) shows a compositional bias: basic and acidic residues. Positions 1–200 (MPGKVYTDEM…TDTSEITAAN (200 aa)) are disordered. The segment covering 114 to 124 (ETNISLSSQGG) has biased composition (polar residues). The Q motif motif lies at 221–249 (GDFSKFPISKDTIKNLQAKGVTYLFPIQS). The Helicase ATP-binding domain maps to 252–431 (FHTVYSGKDV…KKYMRKQYEK (180 aa)). Residue 265-272 (ARTGTGKT) coordinates ATP. The DEAD box signature appears at 374–377 (DEVD). The Helicase C-terminal domain occupies 464–620 (DIVQVYSGSH…SSADAIKSLD (157 aa)). A disordered region spans residues 750–800 (IQESERSFDGPRNRSFGGRGRRPFDRRNNSRNSSGGGGGRRGRSGGFRRGR). Positions 752–761 (ESERSFDGPR) are enriched in basic and acidic residues. Residues 789 to 800 (RRGRSGGFRRGR) show a composition bias toward basic residues.

It belongs to the DEAD box helicase family. DDX21/DDX50 subfamily. As to expression, widely expressed. Expressed at higher level in stomach. Expressed at lower level compared to ddx21-a.

It is found in the nucleus. It localises to the nucleolus. Its subcellular location is the nucleoplasm. The protein localises to the cytoplasm. The protein resides in the cytosol. It is found in the mitochondrion. The catalysed reaction is ATP + H2O = ADP + phosphate + H(+). Its function is as follows. RNA helicase that acts as a sensor of the transcriptional status of both RNA polymerase (Pol) I and II: promotes ribosomal RNA (rRNA) processing and transcription from polymerase II (Pol II). Binds various RNAs, such as rRNAs, snoRNAs, 7SK and, at lower extent, mRNAs. In the nucleolus, localizes to rDNA locus, where it directly binds rRNAs and snoRNAs, and promotes rRNA transcription, processing and modification. Required for rRNA 2'-O-methylation, possibly by promoting the recruitment of late-acting snoRNAs SNORD56 and SNORD58 with pre-ribosomal complexes. In the nucleoplasm, binds 7SK RNA and is recruited to the promoters of Pol II-transcribed genes: acts by facilitating the release of P-TEFb from inhibitory 7SK snRNP in a manner that is dependent on its helicase activity, thereby promoting transcription of its target genes. Required to prevent R-loop-associated DNA damage and transcription-associated genomic instability. The protein is Nucleolar RNA helicase 2-B (ddx21-b) of Xenopus laevis (African clawed frog).